Reading from the N-terminus, the 301-residue chain is Protoheme IX farnesyltransferase (301 aa).

A run of 9 helical transmembrane segments spans residues 20-42 (FTEL…GMWL), 55-75 (VDVI…SGAF), 105-125 (ALMV…MTTW), 126-146 (QAGV…SLYA), 150-172 (LVSN…WFAV), 176-198 (FSIV…FYAI), 227-247 (MFFW…LGLV), 249-269 (VILA…GFKM), and 280-300 (FVYS…ISIF).

Belongs to the UbiA prenyltransferase family. Protoheme IX farnesyltransferase subfamily. Interacts with CtaA.

It localises to the cell membrane. It carries out the reaction heme b + (2E,6E)-farnesyl diphosphate + H2O = Fe(II)-heme o + diphosphate. The protein operates within porphyrin-containing compound metabolism; heme O biosynthesis; heme O from protoheme: step 1/1. In terms of biological role, converts heme B (protoheme IX) to heme O by substitution of the vinyl group on carbon 2 of heme B porphyrin ring with a hydroxyethyl farnesyl side group. The polypeptide is Protoheme IX farnesyltransferase (Listeria innocua serovar 6a (strain ATCC BAA-680 / CLIP 11262)).